The chain runs to 496 residues: Fibronectin type III and SPRY domain-containing protein 1 (496 aa).

Residues 4 to 99 (QREALRKIIK…ALESSEELLE (96 aa)) adopt a coiled-coil conformation. The 58-residue stretch at 105 to 162 (LQAMDSEDFPQAAKQIKDGVTMAPAFRLSLKAKVSDNMSHLMVDFAQERQMLQALKFL) folds into the COS domain. In terms of domain architecture, Fibronectin type-III spans 164-268 (VPSAPVIDLA…EPVTLETPAF (105 aa)). The B30.2/SPRY domain occupies 268–477 (FMFRLDASTS…VTTGLQVPSA (210 aa)). The interval 301 to 336 (KAREKDGKGRTASPINSPARGTPSPKRMPSGRGGRD) is disordered. Residues arginine 310 and arginine 320 each carry the omega-N-methylarginine modification.

In terms of assembly, oligomerization is required for binding to microtubules. In terms of tissue distribution, highly expressed in brain tissues, including cerebellum, cerebral cortex, medulla, occipital pole, frontal lobe, temporal lobe and putamen. Lower expression in spinal cord.

It is found in the cytoplasm. The protein localises to the cytoskeleton. It localises to the microtubule organizing center. The protein resides in the centrosome. Its subcellular location is the nucleus. It is found in the cleavage furrow. Its function is as follows. May be involved in microtubule organization and stabilization. The sequence is that of Fibronectin type III and SPRY domain-containing protein 1 (FSD1) from Homo sapiens (Human).